We begin with the raw amino-acid sequence, 285 residues long: Diphthine methyl ester synthase (285 aa).

Residues leucine 9, aspartate 84, glycine 87, 112-113 (SI), and leucine 163 each bind S-adenosyl-L-methionine. At serine 171 the chain carries Phosphoserine. Valine 225 and histidine 250 together coordinate S-adenosyl-L-methionine.

It belongs to the diphthine synthase family.

The catalysed reaction is 2-[(3S)-amino-3-carboxypropyl]-L-histidyl-[translation elongation factor 2] + 4 S-adenosyl-L-methionine = diphthine methyl ester-[translation elongation factor 2] + 4 S-adenosyl-L-homocysteine + 3 H(+). It functions in the pathway protein modification; peptidyl-diphthamide biosynthesis. S-adenosyl-L-methionine-dependent methyltransferase that catalyzes four methylations of the modified target histidine residue in translation elongation factor 2 (EF-2), to form an intermediate called diphthine methyl ester. The four successive methylation reactions represent the second step of diphthamide biosynthesis. The protein is Diphthine methyl ester synthase (DPH5) of Homo sapiens (Human).